The chain runs to 180 residues: UPF0227 protein YcfP (180 aa).

The protein belongs to the UPF0227 family.

This chain is UPF0227 protein YcfP, found in Escherichia coli O9:H4 (strain HS).